The primary structure comprises 466 residues: Ribulose bisphosphate carboxylase large chain (466 aa).

Residue Lys5 is modified to N6,N6,N6-trimethyllysine. The substrate site is built by Asn114 and Thr164. Lys166 functions as the Proton acceptor in the catalytic mechanism. Lys168 provides a ligand contact to substrate. Lys192, Asp194, and Glu195 together coordinate Mg(2+). Lys192 bears the N6-carboxylysine mark. Catalysis depends on His285, which acts as the Proton acceptor. Substrate contacts are provided by Arg286, His318, and Ser370.

The protein belongs to the RuBisCO large chain family. Type I subfamily. As to quaternary structure, heterohexadecamer of 8 large chains and 8 small chains; disulfide-linked. The disulfide link is formed within the large subunit homodimers. Requires Mg(2+) as cofactor. In terms of processing, the disulfide bond which can form in the large chain dimeric partners within the hexadecamer appears to be associated with oxidative stress and protein turnover.

It is found in the plastid. The protein localises to the chloroplast. It carries out the reaction 2 (2R)-3-phosphoglycerate + 2 H(+) = D-ribulose 1,5-bisphosphate + CO2 + H2O. It catalyses the reaction D-ribulose 1,5-bisphosphate + O2 = 2-phosphoglycolate + (2R)-3-phosphoglycerate + 2 H(+). RuBisCO catalyzes two reactions: the carboxylation of D-ribulose 1,5-bisphosphate, the primary event in carbon dioxide fixation, as well as the oxidative fragmentation of the pentose substrate in the photorespiration process. Both reactions occur simultaneously and in competition at the same active site. This Eremothamnus marlothianus protein is Ribulose bisphosphate carboxylase large chain.